Consider the following 92-residue polypeptide: Small ribosomal subunit protein uS19 (92 aa).

This sequence belongs to the universal ribosomal protein uS19 family.

Functionally, protein S19 forms a complex with S13 that binds strongly to the 16S ribosomal RNA. The sequence is that of Small ribosomal subunit protein uS19 from Nostoc punctiforme (strain ATCC 29133 / PCC 73102).